The primary structure comprises 118 residues: U16-barytoxin-Tl1c (118 aa).

An N-terminal signal peptide occupies residues 1 to 16; that stretch reads MKTIIVFLSFLVLVLA. The propeptide occupies 17-76; it reads TKFGDANEGVNREQTKEVIQNEFRGDFLNEMAAMSLLQQLEAIESALLEKEADRNSRQKR. Cystine bridges form between Cys-77–Cys-92, Cys-84–Cys-97, and Cys-91–Cys-112.

Belongs to the neurotoxin 14 (magi-1) family. 06 (ICK-Trit) subfamily. Expressed by the venom gland.

It is found in the secreted. Its function is as follows. Ion channel inhibitor. This chain is U16-barytoxin-Tl1c, found in Trittame loki (Brush-footed trapdoor spider).